We begin with the raw amino-acid sequence, 247 residues long: DNA repair protein RecO (247 aa).

This sequence belongs to the RecO family.

Functionally, involved in DNA repair and RecF pathway recombination. The protein is DNA repair protein RecO of Caldanaerobacter subterraneus subsp. tengcongensis (strain DSM 15242 / JCM 11007 / NBRC 100824 / MB4) (Thermoanaerobacter tengcongensis).